Here is a 331-residue protein sequence, read N- to C-terminus: Protoheme IX farnesyltransferase (331 aa).

The next 9 helical transmembrane spans lie at 22–42, 50–70, 100–120, 147–167, 174–194, 220–240, 241–261, 273–293, and 307–327; these read LVKP…MWMA, FGVT…INMV, FAGI…NLLA, IVIG…AATG, WVMF…LAIL, ILLY…PLHV, LGSF…WKAV, ATSL…AMGL, and LASL…LGAM.

It belongs to the UbiA prenyltransferase family. Protoheme IX farnesyltransferase subfamily.

It is found in the cell inner membrane. It catalyses the reaction heme b + (2E,6E)-farnesyl diphosphate + H2O = Fe(II)-heme o + diphosphate. Its pathway is porphyrin-containing compound metabolism; heme O biosynthesis; heme O from protoheme: step 1/1. Converts heme B (protoheme IX) to heme O by substitution of the vinyl group on carbon 2 of heme B porphyrin ring with a hydroxyethyl farnesyl side group. This is Protoheme IX farnesyltransferase from Synechococcus sp. (strain JA-3-3Ab) (Cyanobacteria bacterium Yellowstone A-Prime).